A 430-amino-acid polypeptide reads, in one-letter code: MATLSVKPSPRFRLPDWQTNSYLLSTNAERQRDASHQIRQEARVLRNETNNQTIWDEHDNRTRLAERIDTVSRWKEMLDKCLTDLDAEIDALAQMKESAEQNLQAKNLPLDVAIECLTLRESRRDIDVVKDPVEEELHKEVEVIEATKKALQQKISQAFEKLFLLQEARQRLNSDHRGKMETLDIDRGCLSLNLTSPNISLKINPTRVPNGSTSLQQWDDLSRFNKDHGEAEMKKAIELREAIALTIAETNNELEAQRVATEFAFRKRLREMEKLYSELKWQEKNTLEEIAELHEDIRHLEEDLRRKLQNLKLCHTRLEARTYRPNVELCRDQAQYGLTDEVHQLEATIAALKQKLAQAQDALDALYKHLARLQADIACKANSMLLDTKCMDTRRKLTVPAEKFVPEVDTFTRTTNRTLSPLKTCQLELA.

Coiled coils occupy residues 81–162 (CLTD…FEKL) and 265–379 (FRKR…DIAC).

This sequence belongs to the tektin family. As to quaternary structure, microtubule inner protein component of sperm flagellar doublet microtubules. May interact with CCDC172. In terms of processing, tyrosine phosphorylated. Post-translationally, ubiquitinated, leading to its degradation. Deubiquitinated by USP16, promoting its stability. As to expression, expressed in trachea multiciliated cells.

Its subcellular location is the cytoplasm. It localises to the cytoskeleton. The protein resides in the cilium axoneme. It is found in the flagellum axoneme. The protein localises to the microtubule organizing center. Functionally, microtubule inner protein (MIP) part of the dynein-decorated doublet microtubules (DMTs) in cilia and flagellar axoneme. Plays a key role in the assembly or attachment of the inner dynein arm to microtubules in sperm flagella and tracheal cilia. Forms filamentous polymers in the walls of ciliary and flagellar microtubules. This Bos taurus (Bovine) protein is Tektin-2 (TEKT2).